Reading from the N-terminus, the 477-residue chain is UDP-N-acetylmuramate--L-alanine ligase (477 aa).

112–118 is a binding site for ATP; the sequence is GTHGKTT.

Belongs to the MurCDEF family.

It is found in the cytoplasm. It carries out the reaction UDP-N-acetyl-alpha-D-muramate + L-alanine + ATP = UDP-N-acetyl-alpha-D-muramoyl-L-alanine + ADP + phosphate + H(+). Its pathway is cell wall biogenesis; peptidoglycan biosynthesis. Cell wall formation. The chain is UDP-N-acetylmuramate--L-alanine ligase from Verminephrobacter eiseniae (strain EF01-2).